We begin with the raw amino-acid sequence, 97 residues long: Conotoxin Cal6.1a (97 aa).

The N-terminal stretch at 1–22 (MKLTTVLVVALLVLAACQFTVT) is a signal peptide. The interval 23–46 (DNSGDDPENPSLRSVGENQNPDST) is disordered. Positions 23-68 (DNSGDDPENPSLRSVGENQNPDSTKTITAWATRDMTNMRRGLNRPS) are excised as a propeptide. Disulfide bonds link cysteine 71–cysteine 87, cysteine 78–cysteine 91, and cysteine 86–cysteine 96.

It belongs to the conotoxin O1 superfamily. Expressed by the venom duct.

The protein resides in the secreted. Probable neurotoxin with unknown target. Possibly targets ion channels. The sequence is that of Conotoxin Cal6.1a from Californiconus californicus (California cone).